A 290-amino-acid polypeptide reads, in one-letter code: Phosphoribulokinase 1 (290 aa).

An ATP-binding site is contributed by 12–20; the sequence is GSSGAGTST.

This sequence belongs to the phosphoribulokinase family. As to quaternary structure, homooctamer.

It carries out the reaction D-ribulose 5-phosphate + ATP = D-ribulose 1,5-bisphosphate + ADP + H(+). The protein operates within carbohydrate biosynthesis; Calvin cycle. Its activity is regulated as follows. Activated by NADH and inhibited by phosphoenolpyruvate. The polypeptide is Phosphoribulokinase 1 (prkA) (Cereibacter sphaeroides (Rhodobacter sphaeroides)).